The chain runs to 95 residues: Aspartyl/glutamyl-tRNA(Asn/Gln) amidotransferase subunit C (95 aa).

The protein belongs to the GatC family. In terms of assembly, heterotrimer of A, B and C subunits.

The catalysed reaction is L-glutamyl-tRNA(Gln) + L-glutamine + ATP + H2O = L-glutaminyl-tRNA(Gln) + L-glutamate + ADP + phosphate + H(+). It catalyses the reaction L-aspartyl-tRNA(Asn) + L-glutamine + ATP + H2O = L-asparaginyl-tRNA(Asn) + L-glutamate + ADP + phosphate + 2 H(+). Functionally, allows the formation of correctly charged Asn-tRNA(Asn) or Gln-tRNA(Gln) through the transamidation of misacylated Asp-tRNA(Asn) or Glu-tRNA(Gln) in organisms which lack either or both of asparaginyl-tRNA or glutaminyl-tRNA synthetases. The reaction takes place in the presence of glutamine and ATP through an activated phospho-Asp-tRNA(Asn) or phospho-Glu-tRNA(Gln). The chain is Aspartyl/glutamyl-tRNA(Asn/Gln) amidotransferase subunit C from Hydrogenovibrio crunogenus (strain DSM 25203 / XCL-2) (Thiomicrospira crunogena).